The following is a 117-amino-acid chain: Hainantoxin-XV-4 (117 aa).

A signal peptide spans 1 to 20 (MKLCAVIIASLLVCVAVASS). Residues 20–55 (SSDNQKEFAQEKEMTREETQSLGEHEKDDEVTGSEE) are disordered. Residues 21–56 (SDNQKEFAQEKEMTREETQSLGEHEKDDEVTGSEER) constitute a propeptide that is removed on maturation. The span at 23–55 (NQKEFAQEKEMTREETQSLGEHEKDDEVTGSEE) shows a compositional bias: basic and acidic residues. 4 cysteine pairs are disulfide-bonded: Cys58/Cys72, Cys65/Cys78, Cys69/Cys115, and Cys71/Cys91.

Belongs to the neurotoxin 03 (Tx2) family. 02 subfamily. HNTX-XV sub-subfamily. As to expression, expressed by the venom gland.

It is found in the secreted. Functionally, putative ion channel inhibitor. The chain is Hainantoxin-XV-4 from Cyriopagopus hainanus (Chinese bird spider).